Here is a 758-residue protein sequence, read N- to C-terminus: Catalase-peroxidase (758 aa).

Polar residues predominate over residues 1–10; sequence MSDTQDNAPA. The disordered stretch occupies residues 1–59; the sequence is MSDTQDNAPASAQGVDQKAAAGCPVAHDSVTAHGSESESPAIDSPTPHSGGRPRTNRDW. Residues 128–250 constitute a cross-link (tryptophyl-tyrosyl-methioninium (Trp-Tyr) (with M-276)); the sequence is WHAAGTYRID…VGATEMGLIY (123 aa). The active-site Proton acceptor is the His129. The segment at residues 250 to 276 is a cross-link (tryptophyl-tyrosyl-methioninium (Tyr-Met) (with W-128)); sequence YVNPEGPRGNADPAAAAHFIRETFRRM. His291 is a binding site for heme b.

It belongs to the peroxidase family. Peroxidase/catalase subfamily. In terms of assembly, homodimer or homotetramer. It depends on heme b as a cofactor. In terms of processing, formation of the three residue Trp-Tyr-Met cross-link is important for the catalase, but not the peroxidase activity of the enzyme.

It catalyses the reaction H2O2 + AH2 = A + 2 H2O. The enzyme catalyses 2 H2O2 = O2 + 2 H2O. In terms of biological role, bifunctional enzyme with both catalase and broad-spectrum peroxidase activity. The chain is Catalase-peroxidase from Salinispora arenicola (strain CNS-205).